We begin with the raw amino-acid sequence, 398 residues long: Histone-lysine N-methyltransferase ASHR2 (398 aa).

One can recognise an SET domain in the interval 11 to 270; sequence TLLRVAEIGG…EGREVCLSYF (260 aa).

The protein belongs to the class V-like SAM-binding methyltransferase superfamily. Histone-lysine methyltransferase family. SET2 subfamily.

It is found in the nucleus. It localises to the chromosome. It catalyses the reaction L-lysyl-[histone] + S-adenosyl-L-methionine = N(6)-methyl-L-lysyl-[histone] + S-adenosyl-L-homocysteine + H(+). Functionally, histone methyltransferase. The sequence is that of Histone-lysine N-methyltransferase ASHR2 (ASHR2) from Arabidopsis thaliana (Mouse-ear cress).